Consider the following 293-residue polypeptide: Probable endonuclease 4 (293 aa).

Zn(2+) is bound by residues His-77, His-118, Glu-153, Asp-187, His-190, His-221, Asp-234, His-236, and Glu-266.

It belongs to the AP endonuclease 2 family. It depends on Zn(2+) as a cofactor.

The catalysed reaction is Endonucleolytic cleavage to 5'-phosphooligonucleotide end-products.. Its function is as follows. Endonuclease IV plays a role in DNA repair. It cleaves phosphodiester bonds at apurinic or apyrimidinic (AP) sites, generating a 3'-hydroxyl group and a 5'-terminal sugar phosphate. The chain is Probable endonuclease 4 from Mesoplasma florum (strain ATCC 33453 / NBRC 100688 / NCTC 11704 / L1) (Acholeplasma florum).